A 1198-amino-acid polypeptide reads, in one-letter code: Regulator of G-protein signaling 3 (1198 aa).

A C2 domain is found at 137-256; sequence GAGQLRLSID…TPDKEISGWY (120 aa). Residues 299–376 enclose the PDZ domain; that stretch reads KITIPRGKDG…EIILLVWRMV (78 aa). At Arg448 the chain carries Omega-N-methylarginine. Residues 669–933 are disordered; sequence QQLAASPPDS…GAEGGLSLRV (265 aa). The residue at position 674 (Ser674) is a Phosphoserine. The span at 679-697 shows a compositional bias: basic and acidic residues; it reads KMFETEADEKREMALEEGK. Positions 739-751 are enriched in polar residues; that stretch reads EPLSSKDSATSEG. Residues 753-773 show a composition bias toward pro residues; that stretch reads PPGPDAPPSKDVPPCQEPPPA. Acidic residues predominate over residues 877–906; it reads GDEEDAEEAEEVEEGEEGEEDEDEDTSDDN. Residues 907–917 show a composition bias toward basic and acidic residues; that stretch reads YGERSEAKRSS. Residues Ser943, Ser946, Ser978, and Ser1007 each carry the phosphoserine modification. Disordered regions lie at residues 1007–1026 and 1032–1056; these read SGAD…KSKN and KNKL…ADKM. In terms of domain architecture, RGS spans 1073 to 1198; it reads SLEKLLVHKY…INQKKMSPPL (126 aa).

In terms of assembly, binds EFNB1 and EFNB2. Binds the GNB1-GNG2 heterodimer. Phosphorylated by cyclic GMP-dependent protein kinase. Post-translationally, ISGylated.

It is found in the cytoplasm. The protein resides in the nucleus. It localises to the cell membrane. Its function is as follows. Down-regulates signaling from heterotrimeric G-proteins by increasing the GTPase activity of the alpha subunits, thereby driving them into their inactive GDP-bound form. Down-regulates G-protein-mediated release of inositol phosphates and activation of MAP kinases. In Homo sapiens (Human), this protein is Regulator of G-protein signaling 3 (RGS3).